Reading from the N-terminus, the 142-residue chain is Transcriptional regulator MraZ (142 aa).

SpoVT-AbrB domains follow at residues 5 to 47 (THTP…PAPE) and 76 to 119 (AHDE…DRVA).

The protein belongs to the MraZ family. In terms of assembly, forms oligomers.

The protein localises to the cytoplasm. It localises to the nucleoid. The sequence is that of Transcriptional regulator MraZ from Salinispora arenicola (strain CNS-205).